A 227-amino-acid polypeptide reads, in one-letter code: Phosphoribosylformylglycinamidine synthase subunit PurQ (227 aa).

Positions 3-225 constitute a Glutamine amidotransferase type-1 domain; the sequence is FAVIVFPGSN…VKQGAHHVKT (223 aa). Residue Cys-86 is the Nucleophile of the active site. Residues His-194 and Glu-196 contribute to the active site.

Part of the FGAM synthase complex composed of 1 PurL, 1 PurQ and 2 PurS subunits.

It localises to the cytoplasm. It carries out the reaction N(2)-formyl-N(1)-(5-phospho-beta-D-ribosyl)glycinamide + L-glutamine + ATP + H2O = 2-formamido-N(1)-(5-O-phospho-beta-D-ribosyl)acetamidine + L-glutamate + ADP + phosphate + H(+). The enzyme catalyses L-glutamine + H2O = L-glutamate + NH4(+). It functions in the pathway purine metabolism; IMP biosynthesis via de novo pathway; 5-amino-1-(5-phospho-D-ribosyl)imidazole from N(2)-formyl-N(1)-(5-phospho-D-ribosyl)glycinamide: step 1/2. Part of the phosphoribosylformylglycinamidine synthase complex involved in the purines biosynthetic pathway. Catalyzes the ATP-dependent conversion of formylglycinamide ribonucleotide (FGAR) and glutamine to yield formylglycinamidine ribonucleotide (FGAM) and glutamate. The FGAM synthase complex is composed of three subunits. PurQ produces an ammonia molecule by converting glutamine to glutamate. PurL transfers the ammonia molecule to FGAR to form FGAM in an ATP-dependent manner. PurS interacts with PurQ and PurL and is thought to assist in the transfer of the ammonia molecule from PurQ to PurL. The chain is Phosphoribosylformylglycinamidine synthase subunit PurQ from Exiguobacterium sibiricum (strain DSM 17290 / CCUG 55495 / CIP 109462 / JCM 13490 / 255-15).